Here is a 295-residue protein sequence, read N- to C-terminus: UDP-N-acetylenolpyruvoylglucosamine reductase (295 aa).

The FAD-binding PCMH-type domain maps to Gly27 to Ser194. Arg174 is an active-site residue. Cys221 acts as the Proton donor in catalysis. Glu287 is a catalytic residue.

The protein belongs to the MurB family. FAD is required as a cofactor.

It localises to the cytoplasm. It carries out the reaction UDP-N-acetyl-alpha-D-muramate + NADP(+) = UDP-N-acetyl-3-O-(1-carboxyvinyl)-alpha-D-glucosamine + NADPH + H(+). It functions in the pathway cell wall biogenesis; peptidoglycan biosynthesis. Its function is as follows. Cell wall formation. The chain is UDP-N-acetylenolpyruvoylglucosamine reductase from Deinococcus geothermalis (strain DSM 11300 / CIP 105573 / AG-3a).